The chain runs to 194 residues: MLVPTVIEQTARGERAYDIYSRLLKDRIIMLSGEINDQMANSIIAQLLFLDAQDNTKDISLYINSPGGVITSGLAIMDTMNFIKSDVSTIAIGMAASMASILLTSGTKGKRFALPNSTVLIHQPLGGAQGQQTDIQIAANEILKSRKKINEILHETTGQPLEKIQKDTERDNYLTAEEAKEYGLIDEIMANKKK.

Ser97 functions as the Nucleophile in the catalytic mechanism. The active site involves His122.

It belongs to the peptidase S14 family. Fourteen ClpP subunits assemble into 2 heptameric rings which stack back to back to give a disk-like structure with a central cavity, resembling the structure of eukaryotic proteasomes.

The protein resides in the cytoplasm. It carries out the reaction Hydrolysis of proteins to small peptides in the presence of ATP and magnesium. alpha-casein is the usual test substrate. In the absence of ATP, only oligopeptides shorter than five residues are hydrolyzed (such as succinyl-Leu-Tyr-|-NHMec, and Leu-Tyr-Leu-|-Tyr-Trp, in which cleavage of the -Tyr-|-Leu- and -Tyr-|-Trp bonds also occurs).. Functionally, cleaves peptides in various proteins in a process that requires ATP hydrolysis. Has a chymotrypsin-like activity. Plays a major role in the degradation of misfolded proteins. In Lactobacillus helveticus (strain DPC 4571), this protein is ATP-dependent Clp protease proteolytic subunit.